The following is a 587-amino-acid chain: 2-succinyl-5-enolpyruvyl-6-hydroxy-3-cyclohexene-1-carboxylate synthase (587 aa).

It belongs to the TPP enzyme family. MenD subfamily. In terms of assembly, homodimer. Requires Mg(2+) as cofactor. Mn(2+) serves as cofactor. The cofactor is thiamine diphosphate.

It carries out the reaction isochorismate + 2-oxoglutarate + H(+) = 5-enolpyruvoyl-6-hydroxy-2-succinyl-cyclohex-3-ene-1-carboxylate + CO2. The protein operates within quinol/quinone metabolism; 1,4-dihydroxy-2-naphthoate biosynthesis; 1,4-dihydroxy-2-naphthoate from chorismate: step 2/7. It functions in the pathway cofactor biosynthesis; phylloquinone biosynthesis. Functionally, catalyzes the thiamine diphosphate-dependent decarboxylation of 2-oxoglutarate and the subsequent addition of the resulting succinic semialdehyde-thiamine pyrophosphate anion to isochorismate to yield 2-succinyl-5-enolpyruvyl-6-hydroxy-3-cyclohexene-1-carboxylate (SEPHCHC). The polypeptide is 2-succinyl-5-enolpyruvyl-6-hydroxy-3-cyclohexene-1-carboxylate synthase (Prochlorococcus marinus (strain AS9601)).